Here is a 786-residue protein sequence, read N- to C-terminus: AT-rich interactive domain-containing protein 3 (786 aa).

Low complexity predominate over residues 1 to 16; that stretch reads MENLTEIESTMESLTE. Disordered stretches follow at residues 1 to 182, 199 to 251, and 395 to 420; these read MENL…HHAD, SGDH…IPAN, and DTTVDSTNNKDAHVEANTERQDNSSA. 2 stretches are compositionally biased toward basic and acidic residues: residues 18–64 and 87–97; these read ESER…HEDS and DLPKIDDEKNS. The segment covering 130–139 has biased composition (low complexity); sequence ENIVSSEVSS. Composition is skewed to basic and acidic residues over residues 141–156, 169–182, 199–219, 234–248, and 402–416; these read ILKDDGDAVEVDRDTA, KLSEDTGSPHHHAD, SGDHEEFPVNPDNKHSEENQS, AEEREIISPGEHKEI, and NNKDAHVEANTERQD. An ARID domain is found at 494–585; the sequence is EEDQSAFMKE…ALLEYERHKV (92 aa). The tract at residues 606-638 is disordered; sequence QASGSGRARRDAASRAMQGWHSQRLNGNGEVSD. In terms of domain architecture, sHSP spans 686 to 786; sequence VTVVDVGPPA…FVRVPLEQLE (101 aa).

The protein belongs to the small heat shock protein (HSP20) family.

It localises to the nucleus. The protein is AT-rich interactive domain-containing protein 3 (ARID3) of Arabidopsis thaliana (Mouse-ear cress).